The sequence spans 504 residues: ATP synthase subunit alpha (504 aa).

171-178 (GDRQTGKT) is a binding site for ATP.

The protein belongs to the ATPase alpha/beta chains family. In terms of assembly, F-type ATPases have 2 components, CF(1) - the catalytic core - and CF(0) - the membrane proton channel. CF(1) has five subunits: alpha(3), beta(3), gamma(1), delta(1), epsilon(1). CF(0) has three main subunits: a(1), b(2) and c(9-12). The alpha and beta chains form an alternating ring which encloses part of the gamma chain. CF(1) is attached to CF(0) by a central stalk formed by the gamma and epsilon chains, while a peripheral stalk is formed by the delta and b chains.

Its subcellular location is the cell inner membrane. It carries out the reaction ATP + H2O + 4 H(+)(in) = ADP + phosphate + 5 H(+)(out). In terms of biological role, produces ATP from ADP in the presence of a proton gradient across the membrane. The alpha chain is a regulatory subunit. This chain is ATP synthase subunit alpha, found in Helicobacter hepaticus (strain ATCC 51449 / 3B1).